The chain runs to 218 residues: Glycerol-3-phosphate acyltransferase 2 (218 aa).

The next 5 membrane-spanning stretches (helical) occupy residues 6–26, 50–70, 85–105, 115–135, and 159–179; these read YLLIFILAYLIGSFPTGVLVG, VMGPVAGSAVLVIDVLKGTLA, LLLIAGACAILGHTFSIFLKF, AGVFLGYNLKFFGLCALVFLP, and FWFHDIFLTIITGIMMILLFV.

The protein belongs to the PlsY family. As to quaternary structure, probably interacts with PlsX.

It localises to the cell membrane. It catalyses the reaction an acyl phosphate + sn-glycerol 3-phosphate = a 1-acyl-sn-glycero-3-phosphate + phosphate. The protein operates within lipid metabolism; phospholipid metabolism. In terms of biological role, catalyzes the transfer of an acyl group from acyl-phosphate (acyl-PO(4)) to glycerol-3-phosphate (G3P) to form lysophosphatidic acid (LPA). This enzyme utilizes acyl-phosphate as fatty acyl donor, but not acyl-CoA or acyl-ACP. The sequence is that of Glycerol-3-phosphate acyltransferase 2 from Lactobacillus johnsonii (strain CNCM I-12250 / La1 / NCC 533).